The chain runs to 310 residues: tRNA dimethylallyltransferase (310 aa).

10–17 (GPTAVGKS) is an ATP binding site. 12–17 (TAVGKS) contacts substrate. Residues 35–38 (DSMQ) form an interaction with substrate tRNA region.

This sequence belongs to the IPP transferase family. Monomer. Mg(2+) serves as cofactor.

The catalysed reaction is adenosine(37) in tRNA + dimethylallyl diphosphate = N(6)-dimethylallyladenosine(37) in tRNA + diphosphate. Its function is as follows. Catalyzes the transfer of a dimethylallyl group onto the adenine at position 37 in tRNAs that read codons beginning with uridine, leading to the formation of N6-(dimethylallyl)adenosine (i(6)A). The sequence is that of tRNA dimethylallyltransferase from Clostridium perfringens (strain 13 / Type A).